Reading from the N-terminus, the 316-residue chain is 33 kDa chaperonin (316 aa).

2 cysteine pairs are disulfide-bonded: C239–C241 and C272–C275.

The protein belongs to the HSP33 family. In terms of processing, under oxidizing conditions two disulfide bonds are formed involving the reactive cysteines. Under reducing conditions zinc is bound to the reactive cysteines and the protein is inactive.

It localises to the cytoplasm. Its function is as follows. Redox regulated molecular chaperone. Protects both thermally unfolding and oxidatively damaged proteins from irreversible aggregation. Plays an important role in the bacterial defense system toward oxidative stress. In Clostridium perfringens (strain SM101 / Type A), this protein is 33 kDa chaperonin.